The following is an 85-amino-acid chain: Large ribosomal subunit protein bL27 (85 aa).

The segment at 1 to 23 is disordered; that stretch reads MAHKKAGGSTRNGRDSESKRLGV.

This sequence belongs to the bacterial ribosomal protein bL27 family.

The protein is Large ribosomal subunit protein bL27 of Thioalkalivibrio sulfidiphilus (strain HL-EbGR7).